The sequence spans 542 residues: Peptide chain release factor 3 (542 aa).

The region spanning 14–283 (ELRRNFAIIS…YFLEYALKPG (270 aa)) is the tr-type G domain. GTP contacts are provided by residues 23–30 (SHPDAGKT), 91–95 (DTPGH), and 145–148 (NKLD).

Belongs to the TRAFAC class translation factor GTPase superfamily. Classic translation factor GTPase family. PrfC subfamily.

Its subcellular location is the cytoplasm. Its function is as follows. Increases the formation of ribosomal termination complexes and stimulates activities of RF-1 and RF-2. It binds guanine nucleotides and has strong preference for UGA stop codons. It may interact directly with the ribosome. The stimulation of RF-1 and RF-2 is significantly reduced by GTP and GDP, but not by GMP. This chain is Peptide chain release factor 3, found in Nostoc punctiforme (strain ATCC 29133 / PCC 73102).